The following is a 277-amino-acid chain: Large ribosomal subunit protein uL2c (277 aa).

Positions 223–277 (VVMNPIDHPHGGGEGRAPIGRKKPLTPWGHPALGKRSRKNNKYSDTLILRRRKNS) are disordered.

This sequence belongs to the universal ribosomal protein uL2 family. In terms of assembly, part of the 50S ribosomal subunit.

The protein resides in the plastid. It localises to the chloroplast. The protein is Large ribosomal subunit protein uL2c (rpl2) of Marchantia polymorpha (Common liverwort).